Reading from the N-terminus, the 485-residue chain is Glutamyl-tRNA(Gln) amidotransferase subunit A (485 aa).

Catalysis depends on charge relay system residues Lys-79 and Ser-154. Ser-178 serves as the catalytic Acyl-ester intermediate.

Belongs to the amidase family. GatA subfamily. Heterotrimer of A, B and C subunits.

The enzyme catalyses L-glutamyl-tRNA(Gln) + L-glutamine + ATP + H2O = L-glutaminyl-tRNA(Gln) + L-glutamate + ADP + phosphate + H(+). In terms of biological role, allows the formation of correctly charged Gln-tRNA(Gln) through the transamidation of misacylated Glu-tRNA(Gln) in organisms which lack glutaminyl-tRNA synthetase. The reaction takes place in the presence of glutamine and ATP through an activated gamma-phospho-Glu-tRNA(Gln). This Bacillus velezensis (strain DSM 23117 / BGSC 10A6 / LMG 26770 / FZB42) (Bacillus amyloliquefaciens subsp. plantarum) protein is Glutamyl-tRNA(Gln) amidotransferase subunit A.